The sequence spans 435 residues: UPF0597 protein ASA_0240 (435 aa).

This sequence belongs to the UPF0597 family.

The protein is UPF0597 protein ASA_0240 of Aeromonas salmonicida (strain A449).